The sequence spans 564 residues: Formate--tetrahydrofolate ligase (564 aa).

65 to 72 (TPLGEGKT) serves as a coordination point for ATP.

Belongs to the formate--tetrahydrofolate ligase family.

The enzyme catalyses (6S)-5,6,7,8-tetrahydrofolate + formate + ATP = (6R)-10-formyltetrahydrofolate + ADP + phosphate. The protein operates within one-carbon metabolism; tetrahydrofolate interconversion. This chain is Formate--tetrahydrofolate ligase, found in Roseiflexus sp. (strain RS-1).